A 562-amino-acid polypeptide reads, in one-letter code: Protein wntless (562 aa).

Residues 1–13 are Cytoplasmic-facing; the sequence is MSGTILENLSGRK. Residues 14-34 traverse the membrane as a helical segment; that stretch reads LSILVSSLLLCQVACFLIGGL. Topologically, residues 35-239 are lumenal; it reads YAPVPAGHQI…AIHQNGGFTQ (205 aa). N-linked (GlcNAc...) asparagine glycans are attached at residues N58 and N103. Residues 240-260 form a helical membrane-spanning segment; it reads VWLLLKSVLFPFIIGIMVWFW. The Cytoplasmic segment spans residues 261 to 270; that stretch reads RRVHILQRSP. Residues 271–291 traverse the membrane as a helical segment; it reads ALLEYMLLYLGGALSFLNLPL. Topologically, residues 292–311 are lumenal; that stretch reads EYLTLSFEMPYMLLLSDVRQ. The helical transmembrane segment at 312-332 threads the bilayer; it reads GIFYAMLLSFWLVFAGEHMLI. At 333 to 344 the chain is on the cytoplasmic side; it reads QDSPNKSTIRSR. The helical transmembrane segment at 345–365 threads the bilayer; sequence YWKHLSAVVVGCISLFVFDIC. Topologically, residues 366–390 are lumenal; the sequence is ERGMQLRNPFYSIWTTPLGAKVAMS. A helical transmembrane segment spans residues 391–411; the sequence is FIVLAGVSAGIYFLFLCYMVW. The Cytoplasmic portion of the chain corresponds to 412 to 441; it reads KVFKDIGDKRTSLPSMSQARRLHYEGLIYR. The helical transmembrane segment at 442-462 threads the bilayer; that stretch reads FKFLMLATLLCAGLTVAGFIM. At 463-482 the chain is on the lumenal side; it reads GQMAEGHWKWNEDIEIQLTS. Residues 483–503 traverse the membrane as a helical segment; it reads AFLTGVYGMWNIYIFALLILY. The Cytoplasmic portion of the chain corresponds to 504 to 562; the sequence is APSHKQWPTMRHSDETTQSNENIVASAASEEIEFSNLPSDSNPSEISSLTSFTRKVAFD. The disordered stretch occupies residues 538-562; sequence SNLPSDSNPSEISSLTSFTRKVAFD. Polar residues predominate over residues 539-556; the sequence is NLPSDSNPSEISSLTSFT.

It belongs to the wntless family. As to quaternary structure, interacts with wg; in the Golgi. Interacts with Vps35, a component of the retromer complex; wls stability is regulated by Vps35.

It localises to the presynaptic cell membrane. Its subcellular location is the postsynaptic cell membrane. The protein localises to the cell membrane. The protein resides in the endoplasmic reticulum membrane. It is found in the endosome membrane. It localises to the golgi apparatus membrane. Functionally, a segment polarity gene required for wingless (wg)-dependent patterning processes, acting in both wg-sending cells and wg-target cells. In non-neuronal cells wls directs wg secretion. The wls traffic loop encompasses the Golgi, the cell surface, an endocytic compartment and a retrograde route leading back to the Golgi, and involves clathrin-mediated endocytosis and the retromer complex (a conserved protein complex consisting of Vps35 and Vps26). In neuronal cells (the larval motorneuron NMJ), the wg signal moves across the synapse via the release of wls-containing exosome-like vesicles. Postsynaptic wls is required for the trafficking of fz2 through the fz2-interacting protein Grip. In Drosophila mojavensis (Fruit fly), this protein is Protein wntless.